Reading from the N-terminus, the 217-residue chain is CLA biosynthesis enone reductase (217 aa).

Residues R20, S22, and R24 each coordinate FMN. C51 contributes to the 10-oxooctadecanoate binding site. N78 and Q81 together coordinate FMN. R118 is a 10-oxooctadecanoate binding site. Residues N165, S168, G169, and R206 each contribute to the FMN site.

It belongs to the nitroreductase family. Homodimer. It depends on FMN as a cofactor.

The catalysed reaction is 10-oxo-(11E)-octadecenoate + NADH + H(+) = 10-oxooctadecanoate + NAD(+). Its pathway is lipid metabolism; fatty acid metabolism. Functionally, is involved in a saturation metabolic pathway of polyunsaturated fatty acids, that detoxifies unsaturated fatty acids and generates hydroxy fatty acids, oxo fatty acids, conjugated fatty acids such as conjugated linoleic acids (CLAs), and partially saturated trans-fatty acids as intermediates. CLA-ER catalyzes the saturation of the carbon-carbon double bond in 10-oxo-(11E)-octadecenoate to produce 10-oxooctadecanoate, during linoleate metabolism. As part of the gut microbiome, this enzyme modifies host fatty acid composition and is expected to improve human health by altering lipid metabolism related to the onset of metabolic syndrome. This is CLA biosynthesis enone reductase from Lactiplantibacillus plantarum (Lactobacillus plantarum).